The chain runs to 1288 residues: Contactin-associated protein-like 3B (1288 aa).

The N-terminal stretch at 1 to 25 is a signal peptide; that stretch reads MASVAWAVLKVLLLLPTQTWSPVGA. The tract at residues 23 to 61 is disordered; the sequence is VGAGNPPDCDSPLASALPRSSFSSSSELSSSHGPGFSRL. Topologically, residues 26-1245 are extracellular; the sequence is GNPPDCDSPL…LVNADRRDSA (1220 aa). The F5/8 type C domain occupies 31-177; it reads CDSPLASALP…IGMRIEVYGC (147 aa). 6 disulfide bridges follow: C31–C177, C332–C364, C513–C545, C551–C562, C556–C571, and C573–C583. Positions 33-59 are enriched in low complexity; sequence SPLASALPRSSFSSSSELSSSHGPGFS. 2 Laminin G-like domains span residues 183-364 and 370-545; these read VVYF…SFSC and VPVT…IDSC. The N-linked (GlcNAc...) asparagine glycan is linked to N359. The 38-residue stretch at 547 to 584 folds into the EGF-like 1 domain; sequence ITDRCLPSYCEHGGECSQSWDTFSCDCLGTGYTGETCH. The 208-residue stretch at 585–792 folds into the Fibrinogen C-terminal domain; sequence SSLYEQSCEA…LLCRGDKSFW (208 aa). Residue N706 is glycosylated (N-linked (GlcNAc...) asparagine). The Laminin G-like 3 domain maps to 793 to 958; sequence NSASFNTETS…TVTPGVEPGC (166 aa). 5 disulfide bridges follow: C931–C958, C962–C975, C969–C984, C986–C996, and C1167–C1203. The region spanning 959 to 997 is the EGF-like 2 domain; the sequence is AGHCSTYGHLCRNGGRCREKRRGVTCDCAFSAYDGPFCS. Positions 1016 to 1203 constitute a Laminin G-like 4 domain; it reads EHYTLSENSS…RGHVAPMARC (188 aa). The segment at 1215–1236 is disordered; that stretch reads ELAPRLAGGAGRSGPVDEGEPL. Residues 1246 to 1266 traverse the membrane as a helical segment; it reads VIGGVIAVEIFILLCITAIAI. Residues 1267-1288 lie on the Cytoplasmic side of the membrane; that stretch reads RIYQQRKLRKENESKVSKKEEC.

The protein belongs to the neurexin family.

It is found in the membrane. This Homo sapiens (Human) protein is Contactin-associated protein-like 3B (CNTNAP3B).